A 644-amino-acid polypeptide reads, in one-letter code: Exoribonuclease 2 (644 aa).

One can recognise an RNB domain in the interval 189 to 516; the sequence is REDLTALDFV…NHRLLKAVIK (328 aa). In terms of domain architecture, S1 motif spans 561-643; the sequence is DTRFAAEIVD…ETRSIIARPV (83 aa).

The protein belongs to the RNR ribonuclease family. RNase II subfamily.

It localises to the cytoplasm. The catalysed reaction is Exonucleolytic cleavage in the 3'- to 5'-direction to yield nucleoside 5'-phosphates.. In terms of biological role, involved in mRNA degradation. Hydrolyzes single-stranded polyribonucleotides processively in the 3' to 5' direction. The sequence is that of Exoribonuclease 2 from Escherichia coli O6:K15:H31 (strain 536 / UPEC).